Here is a 37-residue protein sequence, read N- to C-terminus: Cytochrome b6-f complex subunit 5 (37 aa).

The chain crosses the membrane as a helical span at residues 5 to 25 (LLSGIVLGLITVSALGLFVAA).

Belongs to the PetG family. As to quaternary structure, the 4 large subunits of the cytochrome b6-f complex are cytochrome b6, subunit IV (17 kDa polypeptide, PetD), cytochrome f and the Rieske protein, while the 4 small subunits are PetG, PetL, PetM and PetN. The complex functions as a dimer.

Its subcellular location is the plastid. The protein localises to the chloroplast thylakoid membrane. Functionally, component of the cytochrome b6-f complex, which mediates electron transfer between photosystem II (PSII) and photosystem I (PSI), cyclic electron flow around PSI, and state transitions. PetG is required for either the stability or assembly of the cytochrome b6-f complex. This Phaeodactylum tricornutum (strain CCAP 1055/1) protein is Cytochrome b6-f complex subunit 5.